Here is a 282-residue protein sequence, read N- to C-terminus: Shikimate dehydrogenase (NADP(+)) (282 aa).

Shikimate is bound by residues serine 15–serine 17 and threonine 62. Lysine 66 serves as the catalytic Proton acceptor. Asparagine 87 and aspartate 103 together coordinate shikimate. Residues glycine 127–alanine 131, asparagine 151–lysine 156, and methionine 220 each bind NADP(+). Shikimate is bound at residue tyrosine 222. Glycine 244 serves as a coordination point for NADP(+).

This sequence belongs to the shikimate dehydrogenase family. In terms of assembly, homodimer.

The enzyme catalyses shikimate + NADP(+) = 3-dehydroshikimate + NADPH + H(+). It participates in metabolic intermediate biosynthesis; chorismate biosynthesis; chorismate from D-erythrose 4-phosphate and phosphoenolpyruvate: step 4/7. Involved in the biosynthesis of the chorismate, which leads to the biosynthesis of aromatic amino acids. Catalyzes the reversible NADPH linked reduction of 3-dehydroshikimate (DHSA) to yield shikimate (SA). The protein is Shikimate dehydrogenase (NADP(+)) of Shewanella baltica (strain OS185).